We begin with the raw amino-acid sequence, 117 residues long: Immunoglobulin lambda variable 2 (117 aa).

The signal sequence occupies residues 1–19 (MAWTSLILSLLALCSGASS). Pyrrolidone carboxylic acid is present on glutamine 20. In terms of domain architecture, Ig-like spans 20–117 (QAVVTQESAL…FCALWYSTHF (98 aa)).

This is Immunoglobulin lambda variable 2 from Mus musculus (Mouse).